The following is a 389-amino-acid chain: MALADISGYLDVLDSVRGFSYLENAREVLRSGEARCLGNPRSEPEYVKALYVIGASRIPVGDGCSHTLEELGVFDISVPGEMVFPSPLDFFERGKPTPLVRSRLQLPNGVRVWLKLEWYNPFSLSVKDRPAVEIISRLSRRVEKGSLVADATSSNFGVALSAVARLYGYRARVYLPGAAEEFGKLLPRLLGAQVIVDPEAPSTVHLLPRVMKDSKNEGFVHVNQFYNDANFEAHMRGTAREIFVQSRRGGLALRGVAGSLGTSGHMSAAAFYLQSVDPSIRAVLVQPAQGDSIPGIRRVETGMLWINMLDISYTLAEVTLEEAMEAVVEVARSDGLVIGPSGGAAVKALAKKAAEGDLEPGDYVVVVPDTGFKYLSLVQNALEGAGDSV.

An N6-(pyridoxal phosphate)lysine modification is found at Lys127. Pyridoxal 5'-phosphate-binding positions include Asn155, 261–265, and Ser341; that span reads GTSGH.

Belongs to the cysteine synthase/cystathionine beta-synthase family. In terms of assembly, homodimer. Requires pyridoxal 5'-phosphate as cofactor.

It carries out the reaction O-acetyl-L-serine + hydrogen sulfide = L-cysteine + acetate. The enzyme catalyses O-phospho-L-serine + hydrogen sulfide + H(+) = L-cysteine + phosphate. The catalysed reaction is L-homocysteine + L-serine = L,L-cystathionine + H2O. The protein operates within amino-acid biosynthesis; L-cysteine biosynthesis; L-cysteine from L-serine: step 2/2. Functionally, cysteine synthase that can also catalyze the synthesis of S-sulfo-L-cysteine from thiosulfate and O(3)-acetyl-L-serine, as well as the sulfhydrylation of L-serine by sulfide. The chain is Protein CysO (cysO) from Aeropyrum pernix (strain ATCC 700893 / DSM 11879 / JCM 9820 / NBRC 100138 / K1).